Reading from the N-terminus, the 167-residue chain is Ribosome maturation factor RimP (167 aa).

The protein belongs to the RimP family.

The protein localises to the cytoplasm. Required for maturation of 30S ribosomal subunits. The sequence is that of Ribosome maturation factor RimP from Cytophaga hutchinsonii (strain ATCC 33406 / DSM 1761 / CIP 103989 / NBRC 15051 / NCIMB 9469 / D465).